Consider the following 98-residue polypeptide: MMCGAPSATMPATAETQEVADQVKSQLESKENQKFDVFKAISFKRQIVAGTNLFIKVDVGGDKCVHLRVFQPLPHENKPLTLSSYQTNKERHDELSYF.

An N-acetylmethionine modification is found at Met-1. The Secondary area of contact signature appears at 46–50; the sequence is QIVAG.

Belongs to the cystatin family. As to expression, widely expressed. Highest expression in heart, liver and kidney. Lower levels in brain, lung and skeletal muscle. Lowest levels in spleen and testis.

It localises to the cytoplasm. Functionally, this is an intracellular thiol proteinase inhibitor. The sequence is that of Cystatin-B (Cstb) from Mus musculus (Mouse).